The following is a 111-amino-acid chain: Cornifelin homolog (111 aa).

Belongs to the cornifelin family.

In Xenopus tropicalis (Western clawed frog), this protein is Cornifelin homolog (cnfn).